We begin with the raw amino-acid sequence, 117 residues long: Large ribosomal subunit protein bL19 (117 aa).

It belongs to the bacterial ribosomal protein bL19 family.

Functionally, this protein is located at the 30S-50S ribosomal subunit interface and may play a role in the structure and function of the aminoacyl-tRNA binding site. The polypeptide is Large ribosomal subunit protein bL19 (Alkalilimnicola ehrlichii (strain ATCC BAA-1101 / DSM 17681 / MLHE-1)).